The sequence spans 199 residues: Shikimate kinase (199 aa).

Position 12–17 (12–17) interacts with ATP; it reads GAGKST. Residue serine 16 coordinates Mg(2+). The substrate site is built by aspartate 34, arginine 58, and glycine 80. Arginine 117 is a binding site for ATP. Residue arginine 136 coordinates substrate. Residues 174 to 199 form a disordered region; the sequence is VSGGDRKSSEAERSGAPLRKSSEVVK. Positions 177 to 186 are enriched in basic and acidic residues; it reads GDRKSSEAER.

This sequence belongs to the shikimate kinase family. Monomer. Mg(2+) serves as cofactor.

The protein resides in the cytoplasm. It catalyses the reaction shikimate + ATP = 3-phosphoshikimate + ADP + H(+). It functions in the pathway metabolic intermediate biosynthesis; chorismate biosynthesis; chorismate from D-erythrose 4-phosphate and phosphoenolpyruvate: step 5/7. In terms of biological role, catalyzes the specific phosphorylation of the 3-hydroxyl group of shikimic acid using ATP as a cosubstrate. The protein is Shikimate kinase of Mycobacterium leprae (strain TN).